Reading from the N-terminus, the 405-residue chain is Riboflavin biosynthesis protein RibBA (405 aa).

A DHBP synthase region spans residues 1 to 205; the sequence is MEQIKLDSIA…IKDLIEYRLT (205 aa). D-ribulose 5-phosphate-binding positions include 30–31, Asp35, 144–148, and Glu168; these read RE and RVGHT. Residue Glu31 coordinates Mg(2+). His147 provides a ligand contact to Mg(2+). The GTP cyclohydrolase II stretch occupies residues 206 to 405; that stretch reads HESLVKREIG…KMGHTILKKD (200 aa). 256-260 is a binding site for GTP; the sequence is RVHSS. Zn(2+)-binding residues include Cys261, Cys272, and Cys274. Residues Gln277, 299-301, and Thr321 contribute to the GTP site; that span reads EGR. The Proton acceptor; for GTP cyclohydrolase activity role is filled by Asp333. Arg335 (nucleophile; for GTP cyclohydrolase activity) is an active-site residue. Positions 356 and 361 each coordinate GTP.

It in the N-terminal section; belongs to the DHBP synthase family. In the C-terminal section; belongs to the GTP cyclohydrolase II family. It depends on Mg(2+) as a cofactor. Requires Mn(2+) as cofactor. Zn(2+) is required as a cofactor.

It catalyses the reaction D-ribulose 5-phosphate = (2S)-2-hydroxy-3-oxobutyl phosphate + formate + H(+). It carries out the reaction GTP + 4 H2O = 2,5-diamino-6-hydroxy-4-(5-phosphoribosylamino)-pyrimidine + formate + 2 phosphate + 3 H(+). The protein operates within cofactor biosynthesis; riboflavin biosynthesis; 2-hydroxy-3-oxobutyl phosphate from D-ribulose 5-phosphate: step 1/1. It functions in the pathway cofactor biosynthesis; riboflavin biosynthesis; 5-amino-6-(D-ribitylamino)uracil from GTP: step 1/4. Its function is as follows. Catalyzes the conversion of D-ribulose 5-phosphate to formate and 3,4-dihydroxy-2-butanone 4-phosphate. Functionally, catalyzes the conversion of GTP to 2,5-diamino-6-ribosylamino-4(3H)-pyrimidinone 5'-phosphate (DARP), formate and pyrophosphate. This Cytophaga hutchinsonii (strain ATCC 33406 / DSM 1761 / CIP 103989 / NBRC 15051 / NCIMB 9469 / D465) protein is Riboflavin biosynthesis protein RibBA.